The following is a 180-amino-acid chain: Large ribosomal subunit protein uL5 (180 aa).

The protein belongs to the universal ribosomal protein uL5 family. Part of the 50S ribosomal subunit; part of the 5S rRNA/L5/L18/L25 subcomplex. Contacts the 5S rRNA and the P site tRNA. Forms a bridge to the 30S subunit in the 70S ribosome.

In terms of biological role, this is one of the proteins that bind and probably mediate the attachment of the 5S RNA into the large ribosomal subunit, where it forms part of the central protuberance. In the 70S ribosome it contacts protein S13 of the 30S subunit (bridge B1b), connecting the 2 subunits; this bridge is implicated in subunit movement. Contacts the P site tRNA; the 5S rRNA and some of its associated proteins might help stabilize positioning of ribosome-bound tRNAs. The polypeptide is Large ribosomal subunit protein uL5 (Mesoplasma florum (strain ATCC 33453 / NBRC 100688 / NCTC 11704 / L1) (Acholeplasma florum)).